The chain runs to 919 residues: Valine--tRNA ligase (919 aa).

Residues 66 to 76 (PNVTGQLHMGH) carry the 'HIGH' region motif. The 'KMSKS' region signature appears at 562-566 (KMSKS). Lys565 lines the ATP pocket. A coiled-coil region spans residues 852–919 (TVDKEAERKR…RISARLEELK (68 aa)).

Belongs to the class-I aminoacyl-tRNA synthetase family. ValS type 1 subfamily. As to quaternary structure, monomer.

It localises to the cytoplasm. It catalyses the reaction tRNA(Val) + L-valine + ATP = L-valyl-tRNA(Val) + AMP + diphosphate. Catalyzes the attachment of valine to tRNA(Val). As ValRS can inadvertently accommodate and process structurally similar amino acids such as threonine, to avoid such errors, it has a 'posttransfer' editing activity that hydrolyzes mischarged Thr-tRNA(Val) in a tRNA-dependent manner. This chain is Valine--tRNA ligase, found in Corynebacterium diphtheriae (strain ATCC 700971 / NCTC 13129 / Biotype gravis).